The chain runs to 585 residues: MVEAGEIGGAAVFALAAAAALSAASSLGAVDFRRPLAAVGGGGAFEWDGVVPWLIGVLGGGDEAAAGGVSVGVAAWYEVWVRVRGGVIAPTLQVAVWVCMVMSVMLVVEATFNSAVSLGVKAIGWRPEWRFKWEPLAGADEEKGRGEYPMVMVQIPMYNELEVYKLSIGAACELKWPKDKLIVQVLDDSTDPFIKNLVELECESWASKGVNIKYVTRSSRKGFKAGALKKGMECDYTKQCEYIAIFDADFQPEPNFLLRTVPFLMHNPNVALVQARWAFVNDTTSLLTRVQKMFFDYHFKVEQEAGSATFAFFSFNGTAGVWRTTAINEAGGWKDRTTVEDMDLAVRASLNGWKFIYVGDIRVKSELPSTYGAYCRQQFRWACGGANLFRKIAMDVLVAKDISLLKKFYMLYSFFLVRRVVAPMVACVLYNIIVPLSVMIPELFIPIWGVAYIPMALLIITTIRNPRNLHIMPFWILFESVMTVLRMRAALTGLMELSGFNKWTVTKKIGSSVEDTQVPLLPKTRKRLRDRINLPEIGFSVFLIFCASYNLIFHGKTSYYFNLYLQGLAFLLLGFNFTGNFACCQ.

A helical transmembrane segment spans residues 87–107 (VIAPTLQVAVWVCMVMSVMLV). Asp188 is a catalytic residue. Positions 247 and 249 each coordinate substrate. The active site involves Asp341. The next 4 membrane-spanning stretches (helical) occupy residues 420–440 (VVAPMVACVLYNIIVPLSVMI), 443–463 (LFIPIWGVAYIPMALLIITTI), 534–554 (LPEIGFSVFLIFCASYNLIFH), and 563–583 (LYLQGLAFLLLGFNFTGNFAC).

The protein belongs to the glycosyltransferase 2 family. Plant cellulose synthase-like A subfamily.

It localises to the golgi apparatus membrane. It catalyses the reaction GDP-mannose + (glucomannan)n = GDP + (glucomannan)n+1.. Its function is as follows. Probable mannan synthase which consists of a 4-beta-mannosyltransferase activity on mannan using GDP-mannose. The beta-1,4-mannan product is the backbone for galactomannan synthesis by galactomannan galactosyltransferase. Galactomannan is a noncellulosic polysaccharides of plant cell wall. This chain is Probable glucomannan 4-beta-mannosyltransferase 7, found in Oryza sativa subsp. japonica (Rice).